The primary structure comprises 124 residues: Small ribosomal subunit protein uS12 (124 aa).

The tract at residues 1-32 is disordered; it reads MPTINQLVRKGRRDKTAKVKTAALKGSPQRRG. At D89 the chain carries 3-methylthioaspartic acid. Residues 104-124 form a disordered region; that stretch reads TQGVKGRKQARSRYGAKKEKS. Over residues 108 to 118 the composition is skewed to basic residues; it reads KGRKQARSRYG.

The protein belongs to the universal ribosomal protein uS12 family. In terms of assembly, part of the 30S ribosomal subunit. Contacts proteins S8 and S17. May interact with IF1 in the 30S initiation complex.

Functionally, with S4 and S5 plays an important role in translational accuracy. Interacts with and stabilizes bases of the 16S rRNA that are involved in tRNA selection in the A site and with the mRNA backbone. Located at the interface of the 30S and 50S subunits, it traverses the body of the 30S subunit contacting proteins on the other side and probably holding the rRNA structure together. The combined cluster of proteins S8, S12 and S17 appears to hold together the shoulder and platform of the 30S subunit. The sequence is that of Small ribosomal subunit protein uS12 from Rhodococcus erythropolis (strain PR4 / NBRC 100887).